A 119-amino-acid chain; its full sequence is Large ribosomal subunit protein bL20 (119 aa).

It belongs to the bacterial ribosomal protein bL20 family.

Functionally, binds directly to 23S ribosomal RNA and is necessary for the in vitro assembly process of the 50S ribosomal subunit. It is not involved in the protein synthesizing functions of that subunit. This is Large ribosomal subunit protein bL20 from Thermoanaerobacter pseudethanolicus (strain ATCC 33223 / 39E) (Clostridium thermohydrosulfuricum).